The primary structure comprises 736 residues: Myosin-7 (736 aa).

Residues 1-342 (NWMVTRINAT…LLGLLEEMRD (342 aa)) form the Myosin motor domain. The tract at residues 219 to 241 (LNKLMTNLRSTHPHFVRCIIPNE) is actin-binding. The IQ domain maps to 345 to 374 (LSRIITRIQAQSRGVLSRMEYKKLLERRDS). A coiled-coil region spans residues 403–736 (LLKSAETEKE…MNKKREAEFQ (334 aa)). Position 701 is a phosphoserine (serine 701). A disordered region spans residues 716-736 (EAGGATSVQIEMNKKREAEFQ). Residues 727–736 (MNKKREAEFQ) are compositionally biased toward basic and acidic residues.

Belongs to the TRAFAC class myosin-kinesin ATPase superfamily. Myosin family. As to quaternary structure, muscle myosin is a hexameric protein that consists of 2 heavy chain subunits (MHC), 2 alkali light chain subunits (MLC) and 2 regulatory light chain subunits (MLC-2). Interacts with ECPAS. Interacts (via C-terminus) with LRRC39.

The protein localises to the cytoplasm. It is found in the myofibril. It localises to the sarcomere. In terms of biological role, myosins are actin-based motor molecules with ATPase activity essential for muscle contraction. Forms regular bipolar thick filaments that, together with actin thin filaments, constitute the fundamental contractile unit of skeletal and cardiac muscle. The chain is Myosin-7 (MYH7) from Oryctolagus cuniculus (Rabbit).